A 459-amino-acid polypeptide reads, in one-letter code: Beta-glucosidase (459 aa).

The active-site Proton donor is the Glu-171. Glu-359 acts as the Nucleophile in catalysis.

Belongs to the glycosyl hydrolase 1 family.

It carries out the reaction Hydrolysis of terminal, non-reducing beta-D-glucosyl residues with release of beta-D-glucose.. This chain is Beta-glucosidase (abg), found in Agrobacterium sp. (strain ATCC 21400).